Consider the following 344-residue polypeptide: Anthranilate phosphoribosyltransferase (344 aa).

5-phospho-alpha-D-ribose 1-diphosphate-binding positions include Gly81, Gly84–Asp85, Ser89, Asn91–Thr94, Lys109–Ser117, and Ala121. Gly81 contributes to the anthranilate binding site. Mg(2+) is bound at residue Ser93. Asn112 serves as a coordination point for anthranilate. Arg167 is an anthranilate binding site. Residues Asp226 and Glu227 each contribute to the Mg(2+) site.

This sequence belongs to the anthranilate phosphoribosyltransferase family. In terms of assembly, homodimer. Mg(2+) serves as cofactor.

The catalysed reaction is N-(5-phospho-beta-D-ribosyl)anthranilate + diphosphate = 5-phospho-alpha-D-ribose 1-diphosphate + anthranilate. The protein operates within amino-acid biosynthesis; L-tryptophan biosynthesis; L-tryptophan from chorismate: step 2/5. In terms of biological role, catalyzes the transfer of the phosphoribosyl group of 5-phosphorylribose-1-pyrophosphate (PRPP) to anthranilate to yield N-(5'-phosphoribosyl)-anthranilate (PRA). In Azorhizobium caulinodans (strain ATCC 43989 / DSM 5975 / JCM 20966 / LMG 6465 / NBRC 14845 / NCIMB 13405 / ORS 571), this protein is Anthranilate phosphoribosyltransferase.